The following is a 1510-amino-acid chain: ABC transporter C family MRP4 (1510 aa).

12 helical membrane-spanning segments follow: residues 12–32, 55–75, 78–98, 109–129, 138–158, 177–197, 319–339, 342–362, 373–393, 427–447, 453–473, and 540–560; these read EAVA…LLLL, PAVV…AGAW, AVLA…SYEV, ALLL…LALQ, FPAL…VIAY, MVAN…GVMG, TFAA…SYFV, LSGN…FFVA, WYLG…AMVY, AWYF…LAIL, IAMV…VPVA, and FVFW…CILL. Residues 320–595 enclose the ABC transmembrane type-1 1 domain; that stretch reads FAAVNTIVSY…FPDLISMMAQ (276 aa). The 224-residue stretch at 629-852 folds into the ABC transporter 1 domain; the sequence is VDIKDGAFSW…GTDFNALVSA (224 aa). Position 664-671 (664-671) interacts with ATP; the sequence is GVIGSGKS. Residues 889-925 are disordered; sequence LKNKMCENGQPSNTRGIKEKKKKEERKKKRTVQEEER. Residues 906–918 are compositionally biased toward basic residues; that stretch reads KEKKKKEERKKKR. The next 6 membrane-spanning stretches (helical) occupy residues 945–965, 985–1005, 1060–1082, 1086–1108, 1154–1174, and 1179–1199; these read GTLI…QIAS, SVVL…FVFM, IAFR…AVMS, WQVL…YYIA, LLDC…WLCL, and LSTF…PGTI. Residues 950–1220 form the ABC transmembrane type-1 2 domain; that stretch reads LIILAQTMFQ…GLNLNARMSR (271 aa). Residues 1267–1501 form the ABC transporter 2 domain; sequence IELIDLKVRY…KSSMFIQLVS (235 aa). ATP is bound at residue 1301–1308; the sequence is GRTGSGKS.

Belongs to the ABC transporter superfamily. ABCC family. Conjugate transporter (TC 3.A.1.208) subfamily. As to expression, expressed in roots, leaves, stalks, tassels, silks, developing seeds and developing embryos.

The protein localises to the membrane. ABC transporter that may affect phytic acid transport and compartmentalization. May function directly or indirectly in removing phytic acid from the cytosol or in vesicle trafficking. Required for phytic acid accumulation in developing seeds. Phytic acid is the primary storage form of phosphorus in cereal grains and other plant seeds. The protein is ABC transporter C family MRP4 of Zea mays (Maize).